The primary structure comprises 220 residues: 7-cyano-7-deazaguanine synthase (220 aa).

Residue 10–20 (FSGGQDSTTCL) participates in ATP binding. Positions 186, 195, 198, and 201 each coordinate Zn(2+).

This sequence belongs to the QueC family. As to quaternary structure, homodimer. The cofactor is Zn(2+).

It catalyses the reaction 7-carboxy-7-deazaguanine + NH4(+) + ATP = 7-cyano-7-deazaguanine + ADP + phosphate + H2O + H(+). It participates in purine metabolism; 7-cyano-7-deazaguanine biosynthesis. Catalyzes the ATP-dependent conversion of 7-carboxy-7-deazaguanine (CDG) to 7-cyano-7-deazaguanine (preQ(0)). The protein is 7-cyano-7-deazaguanine synthase of Bacillus cereus (strain G9842).